Reading from the N-terminus, the 141-residue chain is Lutropin subunit beta (141 aa).

Positions 1-20 are cleaved as a signal peptide; that stretch reads MEMFQGLLLWLLLNTGGAWA. Disulfide bonds link Cys-29–Cys-77, Cys-43–Cys-92, Cys-46–Cys-130, Cys-54–Cys-108, Cys-58–Cys-110, and Cys-113–Cys-120. A glycan (N-linked (GlcNAc...) asparagine) is linked at Asn-33.

The protein belongs to the glycoprotein hormones subunit beta family. As to quaternary structure, heterodimer of a common alpha chain and a unique beta chain which confers biological specificity to thyrotropin, lutropin, follitropin and gonadotropin.

It is found in the secreted. Its function is as follows. Promotes spermatogenesis and ovulation by stimulating the testes and ovaries to synthesize steroids. This is Lutropin subunit beta (LHB) from Ailuropoda melanoleuca (Giant panda).